The following is a 66-amino-acid chain: uncharacterized protein (66 aa).

An HTH cro/C1-type domain is found at 5–59 (LKYYRALHNLTQEDLAKKLGVSRQTIIAIEKGKYDPSLKLAFKIAKFFGVKIEDI). A DNA-binding region (H-T-H motif) is located at residues 16–35 (QEDLAKKLGVSRQTIIAIEK).

This is an uncharacterized protein from Methanocaldococcus jannaschii (strain ATCC 43067 / DSM 2661 / JAL-1 / JCM 10045 / NBRC 100440) (Methanococcus jannaschii).